Reading from the N-terminus, the 1141-residue chain is DNA-directed RNA polymerase subunit beta (1141 aa).

Positions 1117 to 1141 are disordered; it reads GINISREEPPGQLDDTPDTFSRGGM.

It belongs to the RNA polymerase beta chain family. As to quaternary structure, the RNAP catalytic core consists of 2 alpha, 1 beta, 1 beta' and 1 omega subunit. When a sigma factor is associated with the core the holoenzyme is formed, which can initiate transcription.

The enzyme catalyses RNA(n) + a ribonucleoside 5'-triphosphate = RNA(n+1) + diphosphate. DNA-dependent RNA polymerase catalyzes the transcription of DNA into RNA using the four ribonucleoside triphosphates as substrates. In Rubrobacter xylanophilus (strain DSM 9941 / JCM 11954 / NBRC 16129 / PRD-1), this protein is DNA-directed RNA polymerase subunit beta.